The sequence spans 75 residues: Protein RegB (75 aa).

Its function is as follows. Required for optimal exotoxin A production. This chain is Protein RegB (regB), found in Pseudomonas aeruginosa (strain ATCC 15692 / DSM 22644 / CIP 104116 / JCM 14847 / LMG 12228 / 1C / PRS 101 / PAO1).